Reading from the N-terminus, the 154-residue chain is CASP-like protein 5B3 (154 aa).

Over M1–R17 the chain is Cytoplasmic. The chain crosses the membrane as a helical span at residues V18–S38. N-linked (GlcNAc...) asparagine glycosylation is present at N39. At N39–A42 the chain is on the extracellular side. A helical transmembrane segment spans residues F43–L63. Residues D64 to P77 lie on the Cytoplasmic side of the membrane. The helical transmembrane segment at V78–A98 threads the bilayer. Residues S99–S129 are Extracellular-facing. Residues V130–L150 form a helical membrane-spanning segment. The Cytoplasmic segment spans residues L151–L154.

Belongs to the Casparian strip membrane proteins (CASP) family. Homodimer and heterodimers.

The protein resides in the cell membrane. The sequence is that of CASP-like protein 5B3 from Oryza sativa subsp. indica (Rice).